The chain runs to 342 residues: 4-hydroxy-2-oxovalerate aldolase 2 (342 aa).

Residues 8–260 (ITVHDMTLRD…ETGVDVFKIQ (253 aa)) enclose the Pyruvate carboxyltransferase domain. 16 to 17 (RD) serves as a coordination point for substrate. D17 is a Mn(2+) binding site. The Proton acceptor role is filled by H20. Residues S170 and H199 each coordinate substrate. Residues H199 and H201 each coordinate Mn(2+). Y290 is a substrate binding site.

The protein belongs to the 4-hydroxy-2-oxovalerate aldolase family.

It catalyses the reaction (S)-4-hydroxy-2-oxopentanoate = acetaldehyde + pyruvate. This is 4-hydroxy-2-oxovalerate aldolase 2 (mhpE) from Azoarcus sp. (strain BH72).